The sequence spans 106 residues: ATP-dependent Clp protease adapter protein ClpS (106 aa).

This sequence belongs to the ClpS family. As to quaternary structure, binds to the N-terminal domain of the chaperone ClpA.

Functionally, involved in the modulation of the specificity of the ClpAP-mediated ATP-dependent protein degradation. The chain is ATP-dependent Clp protease adapter protein ClpS from Salmonella arizonae (strain ATCC BAA-731 / CDC346-86 / RSK2980).